A 419-amino-acid chain; its full sequence is Histidine--tRNA ligase (419 aa).

It belongs to the class-II aminoacyl-tRNA synthetase family. As to quaternary structure, homodimer.

The protein localises to the cytoplasm. The catalysed reaction is tRNA(His) + L-histidine + ATP = L-histidyl-tRNA(His) + AMP + diphosphate + H(+). This is Histidine--tRNA ligase from Caldicellulosiruptor saccharolyticus (strain ATCC 43494 / DSM 8903 / Tp8T 6331).